Consider the following 662-residue polypeptide: MSNRRETRAQAQQFIDNLKPLQHPNSEKIYLQGSRADLKVGMRQIHQADTLIGGNETNPVFEANPPLKVYDCAGAYSDPDANIDVRKGLEKFREHWIEERGDTEQLAGVSSGFTQQRLADDGLDHLRFESLLPPRRAKTAKRVTQLHYARQGIITPEMEYIAIRENMALAEVNDPILTQKDKGESFGAVIGEPITPEFVRQEVARGRAIIPLNINHPEAEPMIIGRNFLVKVNANIGNSAVTSSIEEEVEKLVWSTRWGADTVMDLSTGRYIHETREWIIRNSPVPIGTVPIYQALEKVNGIAEDLNWETFRDTLIEQAEQGVDYFTIHAGVLLRYVPMTAKRLTGIVSRGGSIMAKWCLSHHKENFLYEHFRDICEICAAYDVSLSLGDGMRPGSIADANDEAQFSELTTLGELVKIAWQYDVQTIIEGPGHIPMNLIKENMDKQLELCDEAPFYTLGPQTTDIAPGYDHFTSGIGAAMIAWYGCAMLCYVTPKEHLGLPNKEDVKQGLITYKIAAHAGDVAKGHPSAQIRDNALSKARFEFRWEDQYNLGLDPDTARAYHDESLPQESAKVAHFCSMCGPKFCSMKITQEVRDYAAAKERDELANNIDIKSDAEYQSCADSETTSERELGMAQMSAEFKAKGAELYHEAADKQRDAVLED.

Residues asparagine 235, methionine 264, tyrosine 293, histidine 329, 349–351 (SRG), 390–393 (DGMR), and glutamate 429 contribute to the substrate site. Residue histidine 433 coordinates Zn(2+). Tyrosine 456 lines the substrate pocket. Histidine 497 serves as a coordination point for Zn(2+). 3 residues coordinate [4Fe-4S] cluster: cysteine 577, cysteine 580, and cysteine 585.

This sequence belongs to the ThiC family. In terms of assembly, homodimer. Requires [4Fe-4S] cluster as cofactor.

It carries out the reaction 5-amino-1-(5-phospho-beta-D-ribosyl)imidazole + S-adenosyl-L-methionine = 4-amino-2-methyl-5-(phosphooxymethyl)pyrimidine + CO + 5'-deoxyadenosine + formate + L-methionine + 3 H(+). It functions in the pathway cofactor biosynthesis; thiamine diphosphate biosynthesis. Catalyzes the synthesis of the hydroxymethylpyrimidine phosphate (HMP-P) moiety of thiamine from aminoimidazole ribotide (AIR) in a radical S-adenosyl-L-methionine (SAM)-dependent reaction. The protein is Phosphomethylpyrimidine synthase of Shewanella halifaxensis (strain HAW-EB4).